We begin with the raw amino-acid sequence, 680 residues long: Probable ATP-dependent RNA helicase pitchoune (680 aa).

The segment at 1–168 (MSIREKLLMK…GKPAKDDEPF (168 aa)) is disordered. Residues 29-42 (KNAQKQEPPKQNGN) show a composition bias toward polar residues. Residues 59–69 (DEDDDLEEDFQ) are compositionally biased toward acidic residues. A compositionally biased stretch (basic residues) spans 74–83 (PKKKQQKQPP). Acidic residues predominate over residues 95 to 141 (SESDDDEQEDEADEDSDLDEVAEVDEEDVDSGSEDDDQQEDEDEEEP). Positions 187 to 215 (FASLKGAVSEATLRAIKEMGFTEMTEIQS) match the Q motif motif. The Helicase ATP-binding domain occupies 218-393 (LTPLLKGRDL…KLALKSEPIY (176 aa)). 231 to 238 (AQTGSGKT) provides a ligand contact to ATP. Residues 341–344 (DEVD) carry the DEVD box motif. In terms of domain architecture, Helicase C-terminal spans 407 to 577 (GLEQGYIVCP…DIQLQLEKLI (171 aa)). Positions 659 to 680 (GSASKQRHFKQVNRDQAKKFMR) are disordered. Positions 670-680 (VNRDQAKKFMR) are enriched in basic and acidic residues.

It belongs to the DEAD box helicase family. DDX18/HAS1 subfamily.

It localises to the nucleus. The protein resides in the nucleolus. The catalysed reaction is ATP + H2O = ADP + phosphate + H(+). Its function is as follows. Probable RNA-dependent helicase. Functions in cell growth and proliferation. May have a role in ribosome biogenesis and, consequently, in protein biosynthesis. The polypeptide is Probable ATP-dependent RNA helicase pitchoune (pit) (Drosophila melanogaster (Fruit fly)).